Reading from the N-terminus, the 148-residue chain is Lysozyme C (148 aa).

Positions 1 to 18 (MKAVIILGLVLLSVTVQG) are cleaved as a signal peptide. The region spanning 19-148 (KIFERCELAR…VSQYVQGCGV (130 aa)) is the C-type lysozyme domain. 4 cysteine pairs are disulfide-bonded: C24-C146, C48-C134, C83-C99, and C95-C113. Active-site residues include E53 and D71.

It belongs to the glycosyl hydrolase 22 family. In terms of assembly, monomer.

It carries out the reaction Hydrolysis of (1-&gt;4)-beta-linkages between N-acetylmuramic acid and N-acetyl-D-glucosamine residues in a peptidoglycan and between N-acetyl-D-glucosamine residues in chitodextrins.. Lysozymes have primarily a bacteriolytic function; those in tissues and body fluids are associated with the monocyte-macrophage system and enhance the activity of immunoagents. The protein is Lysozyme C (LYZ) of Erythrocebus patas (Red guenon).